Reading from the N-terminus, the 146-residue chain is Angiogenin (146 aa).

The first 24 residues, Met1–Ala24, serve as a signal peptide directing secretion. Residue Gln25 is modified to Pyrrolidone carboxylic acid. Residue His37 is the Proton acceptor of the active site. Position 45 (Arg45) interacts with tRNA. Cystine bridges form between Cys50–Cys105, Cys63–Cys116, and Cys81–Cys131. A Nucleolar localization signal motif is present at residues Arg55 to Leu59. TRNA contacts are provided by Cys105 and Ile127. The active-site Proton donor is the His138.

It belongs to the pancreatic ribonuclease family. In terms of assembly, homodimer. Interacts with RNH1; inhibiting ANG ribonuclease activity. Interacts with PCNA.

Its subcellular location is the secreted. It is found in the nucleus. It localises to the nucleolus. The protein resides in the cytoplasm. The protein localises to the stress granule. Has weak tRNA ribonuclease activity by itself due to partial autoinhibition by its C-terminus, which folds into a short alpha-helix that partially occludes the substrate-binding site. In absence of stress, the ribonuclease activity is inhibited by RNH1 in the cytoplasm. In response to stress, dissociates from RNH1 in the cytoplasm and associates with cytoplasmic ribosomes with vacant A-sites: ribosomes directly activate the tRNA ribonuclease activity of ANG by refolding the C-terminal alpha-helix. In response to stress, the angiogenic activity of ANG is inhibited by RNH1 in the nucleus. Functionally, secreted ribonuclease that can either promote or restrict cell proliferation of target cells, depending on the context. Endocytosed in target cells via its receptor PLXNB2 and translocates to the cytoplasm or nucleus. Under stress conditions, localizes to the cytoplasm and promotes the assembly of stress granules (SGs): specifically cleaves a subset of tRNAs within anticodon loops to produce tRNA-derived stress-induced fragments (tiRNAs), resulting in translation repression and inhibition of cell proliferation. tiRNas also prevent formation of apoptosome, thereby promoting cell survival. Preferentially cleaves RNAs between a pyrimidine and an adenosine residue, suggesting that it cleaves the anticodon loop of tRNA(Ala) (32-UUAGCAU-38) after positions 33 and 36. Cleaves a subset of tRNAs, including tRNA(Ala), tRNA(Glu), tRNA(Gly), tRNA(Lys), tRNA(Val), tRNA(His), tRNA(Asp) and tRNA(Sec). Under growth conditions and in differentiated cells, translocates to the nucleus and stimulates ribosomal RNA (rRNA) transcription, including that containing the initiation site sequences of 45S rRNA, thereby promoting cell growth and proliferation. Angiogenin induces vascularization of normal and malignant tissues via its ability to promote rRNA transcription. Involved in hematopoietic stem and progenitor cell (HSPC) growth and survival by promoting rRNA transcription in growth conditions and inhibiting translation in response to stress, respectively. Mediates the crosstalk between myeloid and intestinal epithelial cells to protect the intestinal epithelial barrier integrity: secreted by myeloid cells and promotes intestinal epithelial cells proliferation and survival. Also mediates osteoclast-endothelial cell crosstalk in growing bone: produced by osteoclasts and protects the neighboring vascular cells against senescence by promoting rRNA transcription. The sequence is that of Angiogenin (ANG) from Papio hamadryas (Hamadryas baboon).